Consider the following 337-residue polypeptide: Formamidase (337 aa).

Positions Val-14–Pro-257 constitute a CN hydrolase domain. The Proton acceptor role is filled by Glu-60. Lys-129 acts as the Proton donor in catalysis. Cys-162 functions as the Nucleophile in the catalytic mechanism.

Belongs to the carbon-nitrogen hydrolase superfamily. Aliphatic amidase family.

It carries out the reaction formamide + H2O = formate + NH4(+). Is an aliphatic amidase with a restricted substrate specificity, as it only hydrolyzes formamide. This Bradyrhizobium diazoefficiens (strain JCM 10833 / BCRC 13528 / IAM 13628 / NBRC 14792 / USDA 110) protein is Formamidase.